Reading from the N-terminus, the 876-residue chain is Radial spoke head 10 homolog B (876 aa).

Basic and acidic residues-rich tracts occupy residues 1-16 (MVKE…DKSA) and 57-66 (PKRDSEHTYQ). A disordered region spans residues 1 to 72 (MVKEKKKADK…HTYQSEDETQ (72 aa)). MORN repeat units follow at residues 86-108 (YEGE…GGNT), 109-131 (YHGM…DGLK), 132-154 (YEGD…DGST), 155-177 (YEGE…TQPV), 179-201 (YIGH…QEGT), 204-226 (YEGD…SGNI), 227-249 (YEGQ…TTNE), 251-273 (YTGH…LKRI), 284-306 (YIGA…SGAM), and 307-329 (YEGE…NGRV). Disordered regions lie at residues 360–386 (SQRS…LDGS) and 841–876 (EPPE…KKKK). Residues 373 to 386 (ADREPETLRKLDGS) show a composition bias toward basic and acidic residues. The stretch at 752 to 841 (EKYEKSKDEQ…FELDITVLKE (90 aa)) forms a coiled coil.

As to quaternary structure, interacts with RSPH6A. Does not appear to be part of the axonemal radial spoke complexes 1 or 2.

The protein resides in the cytoplasm. It is found in the cytoskeleton. Its subcellular location is the cilium axoneme. The protein localises to the cell projection. It localises to the cilium. The protein resides in the flagellum. May function as part of the axonemal radial spoke complex 3 (RS3). Radial spoke complexes are important for ciliary motility. This is Radial spoke head 10 homolog B (Rsph10b) from Rattus norvegicus (Rat).